The chain runs to 239 residues: MRIEVKLLPLKDNPILPFNYNYEVYSQILEKVNSIEPTIAKLLSSPHGFWTFSRIIVRKRKILPDKGIEILSDDVSLYISSSNEDIIRAIAEAVEKSPEFKIGELSFLVGDIKAIKVKELGKENVFSTLSPIVVRTVKFEGNKLRHWDLYPHDELFMDRLRKVMILRYSEVMGETPKDRDFTIEVLKFKPTRLMVGSSYIRGSLMVFRYAGSEEIARFGYENGFGEKTGLGFGMVKLIE.

It belongs to the CRISPR-associated protein Cas6/Cse3/CasE family. Monomer; homodimer when crystallized in the presence of crRNA. Varying the crRNA sequence varies degree of oligomerization and structure.

Functionally, CRISPR (clustered regularly interspaced short palindromic repeat), is an adaptive immune system that provides protection against mobile genetic elements (viruses, transposable elements and conjugative plasmids). CRISPR clusters contain sequences complementary to antecedent mobile elements and target invading nucleic acids. CRISPR clusters are transcribed and processed into CRISPR RNA (crRNA), also called psiRNA (prokaryotic silencing) in this organism (Potential). In Pyrococcus horikoshii (strain ATCC 700860 / DSM 12428 / JCM 9974 / NBRC 100139 / OT-3), this protein is Putative CRISPR-associated endoribonuclease-like protein Cas6nc (cas6nc).